Here is a 77-residue protein sequence, read N- to C-terminus: NAD(P)H-quinone oxidoreductase subunit L (77 aa).

Transmembrane regions (helical) follow at residues Leu-12–Tyr-32 and Leu-47–Leu-67.

The protein belongs to the complex I NdhL subunit family. In terms of assembly, NDH-1 can be composed of about 15 different subunits; different subcomplexes with different compositions have been identified which probably have different functions.

It is found in the cellular thylakoid membrane. It carries out the reaction a plastoquinone + NADH + (n+1) H(+)(in) = a plastoquinol + NAD(+) + n H(+)(out). It catalyses the reaction a plastoquinone + NADPH + (n+1) H(+)(in) = a plastoquinol + NADP(+) + n H(+)(out). In terms of biological role, NDH-1 shuttles electrons from an unknown electron donor, via FMN and iron-sulfur (Fe-S) centers, to quinones in the respiratory and/or the photosynthetic chain. The immediate electron acceptor for the enzyme in this species is believed to be plastoquinone. Couples the redox reaction to proton translocation, and thus conserves the redox energy in a proton gradient. Cyanobacterial NDH-1 also plays a role in inorganic carbon-concentration. The polypeptide is NAD(P)H-quinone oxidoreductase subunit L (Prochlorococcus marinus (strain MIT 9301)).